We begin with the raw amino-acid sequence, 298 residues long: Aspartate carbamoyltransferase catalytic subunit (298 aa).

Residues Arg-54 and Thr-55 each contribute to the carbamoyl phosphate site. Lys-82 is a binding site for L-aspartate. Carbamoyl phosphate contacts are provided by Arg-104, His-132, and Gln-135. Arg-165 and Arg-218 together coordinate L-aspartate. Residues Gly-260 and Pro-261 each coordinate carbamoyl phosphate.

Belongs to the aspartate/ornithine carbamoyltransferase superfamily. ATCase family. Heterododecamer (2C3:3R2) of six catalytic PyrB chains organized as two trimers (C3), and six regulatory PyrI chains organized as three dimers (R2).

It carries out the reaction carbamoyl phosphate + L-aspartate = N-carbamoyl-L-aspartate + phosphate + H(+). It participates in pyrimidine metabolism; UMP biosynthesis via de novo pathway; (S)-dihydroorotate from bicarbonate: step 2/3. Functionally, catalyzes the condensation of carbamoyl phosphate and aspartate to form carbamoyl aspartate and inorganic phosphate, the committed step in the de novo pyrimidine nucleotide biosynthesis pathway. The chain is Aspartate carbamoyltransferase catalytic subunit from Wolbachia sp. subsp. Brugia malayi (strain TRS).